The following is a 338-amino-acid chain: Tryptophan--tRNA ligase (338 aa).

ATP is bound by residues 11–13 and 19–20; these read QPS and GN. The 'HIGH' region motif lies at 12-20; the sequence is PSGELSIGN. Residue Asp135 participates in L-tryptophan binding. ATP contacts are provided by residues 147-149, Val189, and 198-202; these read GSD and KMSKS. A 'KMSKS' region motif is present at residues 198–202; it reads KMSKS.

This sequence belongs to the class-I aminoacyl-tRNA synthetase family. As to quaternary structure, homodimer.

It localises to the cytoplasm. It catalyses the reaction tRNA(Trp) + L-tryptophan + ATP = L-tryptophyl-tRNA(Trp) + AMP + diphosphate + H(+). In terms of biological role, catalyzes the attachment of tryptophan to tRNA(Trp). This chain is Tryptophan--tRNA ligase, found in Aliivibrio fischeri (strain ATCC 700601 / ES114) (Vibrio fischeri).